Reading from the N-terminus, the 173-residue chain is NAD(P)H-quinone oxidoreductase subunit J (173 aa).

Belongs to the complex I 30 kDa subunit family. As to quaternary structure, NDH-1 can be composed of about 15 different subunits; different subcomplexes with different compositions have been identified which probably have different functions.

It localises to the cellular thylakoid membrane. The enzyme catalyses a plastoquinone + NADH + (n+1) H(+)(in) = a plastoquinol + NAD(+) + n H(+)(out). It carries out the reaction a plastoquinone + NADPH + (n+1) H(+)(in) = a plastoquinol + NADP(+) + n H(+)(out). In terms of biological role, NDH-1 shuttles electrons from an unknown electron donor, via FMN and iron-sulfur (Fe-S) centers, to quinones in the respiratory and/or the photosynthetic chain. The immediate electron acceptor for the enzyme in this species is believed to be plastoquinone. Couples the redox reaction to proton translocation, and thus conserves the redox energy in a proton gradient. Cyanobacterial NDH-1 also plays a role in inorganic carbon-concentration. This Prochlorococcus marinus (strain NATL1A) protein is NAD(P)H-quinone oxidoreductase subunit J.